Here is a 307-residue protein sequence, read N- to C-terminus: Transcription initiation factor IIB 2 (307 aa).

Residues 7–38 form a TFIIB-type zinc finger; it reads TPKRCPECNSEHLIRDYEHGELICADCGAVIE. Zn(2+) is bound by residues C11, C14, C30, and C33. 2 repeat units span residues 124-207 and 218-299.

This sequence belongs to the TFIIB family.

Functionally, stabilizes TBP binding to an archaeal box-A promoter. Also responsible for recruiting RNA polymerase II to the pre-initiation complex (DNA-TBP-TFIIB). The sequence is that of Transcription initiation factor IIB 2 from Thermoplasma acidophilum (strain ATCC 25905 / DSM 1728 / JCM 9062 / NBRC 15155 / AMRC-C165).